Here is a 253-residue protein sequence, read N- to C-terminus: Triosephosphate isomerase (253 aa).

Residues N12 and K14 each contribute to the substrate site. H96 serves as the catalytic Electrophile. E169 serves as the catalytic Proton acceptor.

The protein belongs to the triosephosphate isomerase family. Homodimer.

The protein resides in the cytoplasm. It carries out the reaction D-glyceraldehyde 3-phosphate = dihydroxyacetone phosphate. It participates in carbohydrate biosynthesis; gluconeogenesis. Its pathway is carbohydrate degradation; glycolysis; D-glyceraldehyde 3-phosphate from glycerone phosphate: step 1/1. Functionally, antigen to the host M.1 monoclonal antibody. The sequence is that of Triosephosphate isomerase (TPI) from Schistosoma mansoni (Blood fluke).